The chain runs to 197 residues: Probable nicotinate-nucleotide adenylyltransferase (197 aa).

This sequence belongs to the NadD family.

It catalyses the reaction nicotinate beta-D-ribonucleotide + ATP + H(+) = deamido-NAD(+) + diphosphate. Its pathway is cofactor biosynthesis; NAD(+) biosynthesis; deamido-NAD(+) from nicotinate D-ribonucleotide: step 1/1. Functionally, catalyzes the reversible adenylation of nicotinate mononucleotide (NaMN) to nicotinic acid adenine dinucleotide (NaAD). The polypeptide is Probable nicotinate-nucleotide adenylyltransferase (Borrelia garinii subsp. bavariensis (strain ATCC BAA-2496 / DSM 23469 / PBi) (Borreliella bavariensis)).